Here is a 230-residue protein sequence, read N- to C-terminus: Flagellar L-ring protein (230 aa).

The N-terminal stretch at 1-15 (MSRLPSLSRLCLAIA) is a signal peptide. Residue Cys-16 is the site of N-palmitoyl cysteine attachment. Residue Cys-16 is the site of S-diacylglycerol cysteine attachment.

Belongs to the FlgH family. In terms of assembly, the basal body constitutes a major portion of the flagellar organelle and consists of four rings (L,P,S, and M) mounted on a central rod.

The protein localises to the cell outer membrane. It is found in the bacterial flagellum basal body. Functionally, assembles around the rod to form the L-ring and probably protects the motor/basal body from shearing forces during rotation. This chain is Flagellar L-ring protein, found in Xanthomonas euvesicatoria pv. vesicatoria (strain 85-10) (Xanthomonas campestris pv. vesicatoria).